We begin with the raw amino-acid sequence, 427 residues long: MDFVVNKIEAISGSVKVPGDKSISHRSIILGSISKGTTYVRDILLSEDVQRTIGFFKKLGVSIEQKNKVIALKGMAIEDFRPYTQELDMGNSGTSARLLLGLISGSPHAYVLNGDPFLKKRPMKRVTKPLEQMGAHIEYLEREDLLPIKIKGGNLRGIHYKLPVASAQIKSALILAGLHCSGKTVIEEPVATRDHTEIMIQHFGGTVEKNNHFIQIKGNQRLLANEVLVPGDISSAAFLLVLSAIVPKAELMIEDVGLNPTRSGILHVLESMGARMEILEERVVNGERVGNILIRHSCLKAVTIEGDIIPTLIDEIPILAVAATQAEGITVIRDAQELKVKESNRIDTVVSQLKKMGANIEASHDGMIIQGPTKLKGATIDSEFDHRIAMAFAVAGMVAEGETKILKSECIAVSFPEFTEILKKISK.

3-phosphoshikimate contacts are provided by Lys21, Ser22, and Arg26. Lys21 is a phosphoenolpyruvate binding site. Positions 93 and 121 each coordinate phosphoenolpyruvate. 3-phosphoshikimate is bound by residues Ser166, Gln168, Asp314, and Lys341. A phosphoenolpyruvate-binding site is contributed by Gln168. The active-site Proton acceptor is Asp314. Phosphoenolpyruvate is bound by residues Arg345 and Arg387.

It belongs to the EPSP synthase family. In terms of assembly, monomer.

It localises to the cytoplasm. It carries out the reaction 3-phosphoshikimate + phosphoenolpyruvate = 5-O-(1-carboxyvinyl)-3-phosphoshikimate + phosphate. The protein operates within metabolic intermediate biosynthesis; chorismate biosynthesis; chorismate from D-erythrose 4-phosphate and phosphoenolpyruvate: step 6/7. Functionally, catalyzes the transfer of the enolpyruvyl moiety of phosphoenolpyruvate (PEP) to the 5-hydroxyl of shikimate-3-phosphate (S3P) to produce enolpyruvyl shikimate-3-phosphate and inorganic phosphate. This chain is 3-phosphoshikimate 1-carboxyvinyltransferase, found in Alkaliphilus oremlandii (strain OhILAs) (Clostridium oremlandii (strain OhILAs)).